Reading from the N-terminus, the 638-residue chain is Chaperone protein HtpG (638 aa).

An a; substrate-binding region spans residues 1–346 (MSQQETHGFQ…SNDLPLNVSR (346 aa)). Positions 347-563 (EILQDNKVTT…EGEMSTQMIK (217 aa)) are b. Residues 564–638 (LMQAAGQDVP…MNQMLLASVK (75 aa)) form a c region.

Belongs to the heat shock protein 90 family. In terms of assembly, homodimer.

The protein localises to the cytoplasm. In terms of biological role, molecular chaperone. Has ATPase activity. In Shewanella pealeana (strain ATCC 700345 / ANG-SQ1), this protein is Chaperone protein HtpG.